We begin with the raw amino-acid sequence, 185 residues long: 3-hydroxyanthranilate 3,4-dioxygenase (185 aa).

Arginine 44 is an O2 binding site. Residues histidine 48, glutamate 54, and histidine 95 each coordinate Fe cation. Glutamate 54 contributes to the substrate binding site. Residues arginine 99 and glutamate 109 each contribute to the substrate site. The a divalent metal cation site is built by cysteine 124, cysteine 127, cysteine 161, and cysteine 164.

The protein belongs to the 3-HAO family. Fe(2+) is required as a cofactor.

It localises to the cytoplasm. The catalysed reaction is 3-hydroxyanthranilate + O2 = (2Z,4Z)-2-amino-3-carboxymuconate 6-semialdehyde. The protein operates within cofactor biosynthesis; NAD(+) biosynthesis; quinolinate from L-kynurenine: step 3/3. Functionally, catalyzes the oxidative ring opening of 3-hydroxyanthranilate to 2-amino-3-carboxymuconate semialdehyde, which spontaneously cyclizes to quinolinate. This chain is 3-hydroxyanthranilate 3,4-dioxygenase, found in Podospora anserina (strain S / ATCC MYA-4624 / DSM 980 / FGSC 10383) (Pleurage anserina).